The following is a 372-amino-acid chain: Geranylgeranyl pyrophosphate synthase 4 (372 aa).

An N-terminal signal peptide occupies residues Met1–Thr22. Isopentenyl diphosphate is bound by residues Lys121, Arg124, and His153. Residues Asp160 and Asp166 each contribute to the Mg(2+) site. Arg171 is a binding site for dimethylallyl diphosphate. Position 172 (Arg172) interacts with isopentenyl diphosphate. Residues Lys257, Thr258, Gln295, Lys312, and Lys322 each contribute to the dimethylallyl diphosphate site.

It belongs to the FPP/GGPP synthase family. Monomer. The cofactor is Mg(2+). In terms of tissue distribution, faintly expressed in flowers. Expressed in roots and siliques.

The protein localises to the endoplasmic reticulum. It catalyses the reaction isopentenyl diphosphate + dimethylallyl diphosphate = (2E)-geranyl diphosphate + diphosphate. It carries out the reaction isopentenyl diphosphate + (2E)-geranyl diphosphate = (2E,6E)-farnesyl diphosphate + diphosphate. The catalysed reaction is isopentenyl diphosphate + (2E,6E)-farnesyl diphosphate = (2E,6E,10E)-geranylgeranyl diphosphate + diphosphate. Its pathway is isoprenoid biosynthesis; farnesyl diphosphate biosynthesis; farnesyl diphosphate from geranyl diphosphate and isopentenyl diphosphate: step 1/1. It functions in the pathway isoprenoid biosynthesis; geranyl diphosphate biosynthesis; geranyl diphosphate from dimethylallyl diphosphate and isopentenyl diphosphate: step 1/1. The protein operates within isoprenoid biosynthesis; geranylgeranyl diphosphate biosynthesis; geranylgeranyl diphosphate from farnesyl diphosphate and isopentenyl diphosphate: step 1/1. Its function is as follows. Catalyzes the trans-addition of the three molecules of isopentenyl diphosphate (IPP) onto dimethylallyl diphosphate (DMAPP) to form geranylgeranyl diphosphate. In Arabidopsis thaliana (Mouse-ear cress), this protein is Geranylgeranyl pyrophosphate synthase 4.